Reading from the N-terminus, the 195-residue chain is ADP-ribosylation factor L (195 aa).

Residue glycine 2 is the site of N-myristoyl glycine attachment. GTP is bound by residues 25–32 (GLENSGKT), 72–76 (DLLYP), and 131–134 (NKQD).

The protein belongs to the small GTPase superfamily. Arf family.

May be involved in trafficking events within the endosomal system. This chain is ADP-ribosylation factor L (arrL), found in Dictyostelium discoideum (Social amoeba).